The following is a 444-amino-acid chain: Phosphoglucosamine mutase (444 aa).

S102 functions as the Phosphoserine intermediate in the catalytic mechanism. The Mg(2+) site is built by S102, D241, D243, and D245. The residue at position 102 (S102) is a Phosphoserine.

It belongs to the phosphohexose mutase family. The cofactor is Mg(2+). Post-translationally, activated by phosphorylation.

It carries out the reaction alpha-D-glucosamine 1-phosphate = D-glucosamine 6-phosphate. In terms of biological role, catalyzes the conversion of glucosamine-6-phosphate to glucosamine-1-phosphate. This is Phosphoglucosamine mutase from Buchnera aphidicola subsp. Acyrthosiphon pisum (strain 5A).